Consider the following 672-residue polypeptide: Acetoacetyl-CoA synthetase (672 aa).

The protein belongs to the ATP-dependent AMP-binding enzyme family.

The protein localises to the cytoplasm. It localises to the cytosol. The catalysed reaction is acetoacetate + ATP + CoA = acetoacetyl-CoA + AMP + diphosphate. In terms of biological role, activates acetoacetate to acetoacetyl-CoA. This Xenopus tropicalis (Western clawed frog) protein is Acetoacetyl-CoA synthetase (aacs).